An 861-amino-acid polypeptide reads, in one-letter code: Ataxin-7-like protein 1 (861 aa).

Disordered regions lie at residues 1 to 31, 154 to 189, 342 to 448, 606 to 673, and 772 to 861; these read MTSE…AMAT, GHHS…KGSR, KSRE…GADE, PIPA…LSGP, and FDKS…RTLP. In terms of domain architecture, SCA7 spans 284–351; sequence RRLSEREFDP…KSREKEVKDK (68 aa). Residues 342 to 354 show a composition bias toward basic and acidic residues; it reads KSREKEVKDKEHL. A compositionally biased stretch (polar residues) spans 355–369; the sequence is LTSTREILPSQSGPA. 3 stretches are compositionally biased toward low complexity: residues 372–381, 403–417, and 606–616; these read SLLGSSGSSG, SSAN…SNHS, and PIPAVIPSPSH. Positions 617-627 are enriched in basic residues; sequence KPSKTKTSKSS. The segment covering 628 to 641 has biased composition (basic and acidic residues); it reads KVKDLSTRSDESPS. 2 stretches are compositionally biased toward low complexity: residues 648–671 and 783–794; these read QSST…SPLS and SSSSSKACKITK. Residues 817 to 828 are compositionally biased toward polar residues; that stretch reads VNSTSSRQVGKN. The span at 829-847 shows a compositional bias: low complexity; it reads SSLALSQSSPSSISSPGHS.

This chain is Ataxin-7-like protein 1 (ATXN7L1), found in Homo sapiens (Human).